The chain runs to 147 residues: MADNDNEDVIMDDLVEEYVETEEENFVDSEEESEDKDEIVESPSICEGFVQASSQTLVIIPDNERITSNVLTTFEATRLVAVRAQQLAINGSTMLKKKYSSPIDIAKQELFNRKIPLLVMRCIKVTPDGQKIVEIWNPREMGIPLLD.

Belongs to the archaeal RpoK/eukaryotic RPB6 RNA polymerase subunit family. In terms of assembly, part of the viral DNA-directed RNA polymerase that consists of 8 polII-like subunits (RPB1, RPB2, RPB3, RPB5, RPB6, RPB7, RPB9, RPB10), a capping enzyme and a termination factor.

The protein localises to the host cytoplasm. It is found in the virion. Functionally, component of the DNA-directed RNA polymerase (RNAP) that catalyzes the transcription in the cytoplasm of viral DNA into RNA using the four ribonucleoside triphosphates as substrates. In Ornithodoros (relapsing fever ticks), this protein is DNA-directed RNA polymerase subunit 6 homolog.